The primary structure comprises 127 residues: Protein NEGATIVE REGULATOR OF RESISTANCE (127 aa).

Disordered regions lie at residues 1 to 28 (MDAT…VDEV) and 47 to 127 (TRRL…RAPA). Low complexity predominate over residues 112 to 127 (PPSDAPATPRSARAPA).

This sequence belongs to the NPR1-interactor family. Interacts with NPR1/NH1. Interacts with NPR3/NH3.

It is found in the nucleus. Functionally, acts as a negative regulator of disease resistance. Acts on basal resistance, age-related resistance and resistance mediated by the LRR receptor kinase XA21. Plants over-expressing NRR display enhanced susceptibility to the bacterial blight Xanthomonas oryzae pv. oryzae (Xoo). Binds to and represses NPR1/NH1-mediated transcriptional activation of LG2 in vitro. This Oryza sativa subsp. japonica (Rice) protein is Protein NEGATIVE REGULATOR OF RESISTANCE.